The following is a 474-amino-acid chain: Glycogen synthase (474 aa).

K12 is an ADP-alpha-D-glucose binding site.

It belongs to the glycosyltransferase 1 family. Bacterial/plant glycogen synthase subfamily.

It catalyses the reaction [(1-&gt;4)-alpha-D-glucosyl](n) + ADP-alpha-D-glucose = [(1-&gt;4)-alpha-D-glucosyl](n+1) + ADP + H(+). Its pathway is glycan biosynthesis; glycogen biosynthesis. Synthesizes alpha-1,4-glucan chains using ADP-glucose. In Xanthomonas campestris pv. campestris (strain 8004), this protein is Glycogen synthase.